A 126-amino-acid polypeptide reads, in one-letter code: Aspartate 1-decarboxylase (126 aa).

The Schiff-base intermediate with substrate; via pyruvic acid role is filled by S25. Pyruvic acid (Ser) is present on S25. A substrate-binding site is contributed by T57. The active-site Proton donor is Y58. 73 to 75 (GAA) contacts substrate.

The protein belongs to the PanD family. Heterooctamer of four alpha and four beta subunits. Pyruvate serves as cofactor. Is synthesized initially as an inactive proenzyme, which is activated by self-cleavage at a specific serine bond to produce a beta-subunit with a hydroxyl group at its C-terminus and an alpha-subunit with a pyruvoyl group at its N-terminus.

It localises to the cytoplasm. It carries out the reaction L-aspartate + H(+) = beta-alanine + CO2. It participates in cofactor biosynthesis; (R)-pantothenate biosynthesis; beta-alanine from L-aspartate: step 1/1. Its function is as follows. Catalyzes the pyruvoyl-dependent decarboxylation of aspartate to produce beta-alanine. The sequence is that of Aspartate 1-decarboxylase from Sodalis glossinidius (strain morsitans).